Consider the following 531-residue polypeptide: Serine-type carboxypeptidase F (531 aa).

The first 25 residues, 1–25, serve as a signal peptide directing secretion; the sequence is MLFRSLLSTAVLAVSLCTDNASAAK. An N-linked (GlcNAc...) asparagine glycan is attached at Asn20. A propeptide spanning residues 26-52 is cleaved from the precursor; it reads HGRFGQKARDAMNIAKRSANAVKHSLK. N-linked (GlcNAc...) asparagine glycosylation is found at Asn63, Asn94, and Asn155. Ser211 is a catalytic residue. N-linked (GlcNAc...) asparagine glycosylation is found at Asn228, Asn271, Asn309, and Asn378. Asp430 is a catalytic residue. Asn436 and Asn444 each carry an N-linked (GlcNAc...) asparagine glycan. His507 is an active-site residue.

The protein belongs to the peptidase S10 family. As to quaternary structure, monomer.

With respect to regulation, inhibited by DFP, and Hg(Cl)2. Removes any amino acid from the C-terminus of a long peptide. Digests preferentially peptides containing a positively charged residue in P1' position, as well as arginine, lysine or phenylalanine in P1 position of ester substrate. Also catalyzes peptide synthesis. The polypeptide is Serine-type carboxypeptidase F (pepF) (Aspergillus niger).